A 280-amino-acid chain; its full sequence is 2-dehydro-3-deoxyphosphooctonate aldolase (280 aa).

The protein belongs to the KdsA family.

It localises to the cytoplasm. It carries out the reaction D-arabinose 5-phosphate + phosphoenolpyruvate + H2O = 3-deoxy-alpha-D-manno-2-octulosonate-8-phosphate + phosphate. It functions in the pathway carbohydrate biosynthesis; 3-deoxy-D-manno-octulosonate biosynthesis; 3-deoxy-D-manno-octulosonate from D-ribulose 5-phosphate: step 2/3. Its pathway is bacterial outer membrane biogenesis; lipopolysaccharide biosynthesis. The polypeptide is 2-dehydro-3-deoxyphosphooctonate aldolase (Neisseria meningitidis serogroup B (strain ATCC BAA-335 / MC58)).